The primary structure comprises 193 residues: dCTP deaminase (193 aa).

DCTP-binding positions include 110 to 115, Asp-128, 136 to 138, Tyr-171, Lys-178, and Gln-182; these read RSSLAR and VLE. The Proton donor/acceptor role is filled by Glu-138. Positions 169–193 are disordered; it reads RPYNSRQDAKYRGQQGAVASRIDKD.

It belongs to the dCTP deaminase family. As to quaternary structure, homotrimer.

The catalysed reaction is dCTP + H2O + H(+) = dUTP + NH4(+). It functions in the pathway pyrimidine metabolism; dUMP biosynthesis; dUMP from dCTP (dUTP route): step 1/2. Functionally, catalyzes the deamination of dCTP to dUTP. The sequence is that of dCTP deaminase from Yersinia pestis bv. Antiqua (strain Antiqua).